A 734-amino-acid chain; its full sequence is Photosystem I P700 chlorophyll a apoprotein A2 (734 aa).

The next 8 helical transmembrane spans lie at 46–69 (IFAS…FHVA), 135–158 (LYTG…LHLQ), 175–199 (LNHH…HVAI), 273–291 (IAHH…GHMY), 330–353 (IHFQ…QHMY), 369–395 (AALY…IFFI), 417–439 (AIIS…LYVH), and 517–535 (FLVH…LILV). Residues cysteine 559 and cysteine 568 each contribute to the [4Fe-4S] cluster site. 2 helical membrane-spanning segments follow: residues 575–596 (AFYL…YWHW) and 643–665 (LSVW…MFLI). Residues histidine 654, methionine 662, and tyrosine 670 each coordinate chlorophyll a. Tryptophan 671 provides a ligand contact to phylloquinone. Residues 707 to 727 (LVGLAHFSVGYIFTYAAFLIA) traverse the membrane as a helical segment.

The protein belongs to the PsaA/PsaB family. The PsaA/B heterodimer binds the P700 chlorophyll special pair and subsequent electron acceptors. PSI consists of a core antenna complex that captures photons, and an electron transfer chain that converts photonic excitation into a charge separation. The eukaryotic PSI reaction center is composed of at least 11 subunits. P700 is a chlorophyll a/chlorophyll a' dimer, A0 is one or more chlorophyll a, A1 is one or both phylloquinones and FX is a shared 4Fe-4S iron-sulfur center. serves as cofactor.

It localises to the plastid. The protein localises to the chloroplast thylakoid membrane. It catalyses the reaction reduced [plastocyanin] + hnu + oxidized [2Fe-2S]-[ferredoxin] = oxidized [plastocyanin] + reduced [2Fe-2S]-[ferredoxin]. Functionally, psaA and PsaB bind P700, the primary electron donor of photosystem I (PSI), as well as the electron acceptors A0, A1 and FX. PSI is a plastocyanin-ferredoxin oxidoreductase, converting photonic excitation into a charge separation, which transfers an electron from the donor P700 chlorophyll pair to the spectroscopically characterized acceptors A0, A1, FX, FA and FB in turn. Oxidized P700 is reduced on the lumenal side of the thylakoid membrane by plastocyanin. The chain is Photosystem I P700 chlorophyll a apoprotein A2 from Phaseolus vulgaris (Kidney bean).